The sequence spans 207 residues: Porin MspD (207 aa).

Residues 1–24 (MRYLVMMFALLVSVTLVSPRPANA) form the signal peptide.

This sequence belongs to the mycobacterial porin (TC 1.B.24) family. Octamers. Probably forms a goblet with the wide end on the exterior of the outer membrane and a central channel. It is not known if mixed oligomers of MspD with other Msp subunits form in vivo.

The protein resides in the cell outer membrane. It localises to the secreted. Its subcellular location is the cell wall. Its function is as follows. A backup porin induced when MspA, the major porin, is deleted. It probably forms a water-filled channel which favors the permeation of cations. There are about 2400 porins in wild-type, 800 in an mspA deletion and 150 in a double mspA-mspC deletion. The chain is Porin MspD (mspD) from Mycolicibacterium smegmatis (strain ATCC 700084 / mc(2)155) (Mycobacterium smegmatis).